The chain runs to 551 residues: Prunin 1 Pru du 6 (551 aa).

Residues 1–20 (MAKAFVFSLCLLLVFNGCLA) form the signal peptide. 2 cysteine pairs are disulfide-bonded: Cys-32/Cys-65 and Cys-108/Cys-374. In terms of domain architecture, Cupin type-1 1 spans 37-312 (LQAREPDNRI…ALNVNEETAR (276 aa)). Disordered stretches follow at residues 111-194 (TFEE…QKTR), 238-293 (NPRK…NVFS), and 329-360 (GNLD…RQQQ). 3 stretches are compositionally biased toward low complexity: residues 114–124 (ESQQSSQQGRQ), 132–148 (QQQQ…QQEQ), and 168–185 (QEQQ…QQFR). Residue Arg-194 coordinates Ca(2+). Positions 254–275 (QQGQSQPRQQGEQGRPGQHQQP) are enriched in low complexity. Residues 282 to 293 (QEQQGNGNNVFS) show a composition bias toward polar residues. The segment covering 339–350 (GRQEREHEERQQ) has biased composition (basic and acidic residues). Residues 351–360 (EQLQQERQQQ) show a composition bias toward low complexity. Residues 367–372 (NGLEET) carry the NGXEET; peptidase recognition motif motif. Residues 380–529 (ENIGNPERAD…AYQISREQAR (150 aa)) enclose the Cupin type-1 2 domain.

It belongs to the 11S seed storage protein (globulins) family. Hexamer of two trimers; each subunit is composed of an acidic and a basic chain derived from a single precursor and linked by a disulfide bond. In terms of processing, proteolytically processed from a single precursor to produce an acidic and a basic chain that are linked by a disulfide bond. In terms of tissue distribution, expressed in seed (at protein level). Expressed in seed.

Functionally, seed storage protein. The polypeptide is Prunin 1 Pru du 6 (Prunus dulcis (Almond)).